The primary structure comprises 556 residues: Arginine--tRNA ligase (556 aa).

Positions 132–142 (ANPTGDLHLGH) match the 'HIGH' region motif.

It belongs to the class-I aminoacyl-tRNA synthetase family. In terms of assembly, monomer.

Its subcellular location is the cytoplasm. It carries out the reaction tRNA(Arg) + L-arginine + ATP = L-arginyl-tRNA(Arg) + AMP + diphosphate. The polypeptide is Arginine--tRNA ligase (Listeria monocytogenes serotype 4a (strain HCC23)).